The chain runs to 127 residues: Acetylcholine receptor subunit alpha (127 aa).

Residues 1–127 (ADGIFAIDQF…YFIVNVIIPC (127 aa)) lie on the Extracellular side of the membrane. Cys-33 and Cys-47 are disulfide-bonded. Asn-46 and Asn-94 each carry an N-linked (GlcNAc...) asparagine glycan. An intrachain disulfide couples Cys-97 to Cys-98.

The protein belongs to the ligand-gated ion channel (TC 1.A.9) family. Acetylcholine receptor (TC 1.A.9.1) subfamily. Alpha-1/CHRNA1 sub-subfamily. In terms of assembly, one of the alpha chains that assemble within the acetylcholine receptor, a pentamer of two alpha chains, a beta, a delta, and a gamma or epsilon chains.

The protein resides in the postsynaptic cell membrane. Its subcellular location is the cell membrane. It carries out the reaction K(+)(in) = K(+)(out). The enzyme catalyses Na(+)(in) = Na(+)(out). Upon acetylcholine binding, the AChR responds by an extensive change in conformation that affects all subunits and leads to opening of an ion-conducting channel across the plasma membrane. Does not bind alpha-bungarotoxin. This Natrix tessellata (Dice snake) protein is Acetylcholine receptor subunit alpha (CHRNA1).